Here is a 532-residue protein sequence, read N- to C-terminus: Membrane protein insertase YidC (532 aa).

Transmembrane regions (helical) follow at residues 7–27 (FFIF…QSQM), 336–356 (LTIL…ITFI), 413–433 (GGFL…YMLI), 450–470 (LSSQ…MFFI), and 492–512 (PVIF…YYII).

The protein belongs to the OXA1/ALB3/YidC family. Type 1 subfamily. In terms of assembly, interacts with the Sec translocase complex via SecD. Specifically interacts with transmembrane segments of nascent integral membrane proteins during membrane integration.

It is found in the cell membrane. Functionally, required for the insertion and/or proper folding and/or complex formation of integral membrane proteins into the membrane. Involved in integration of membrane proteins that insert both dependently and independently of the Sec translocase complex, as well as at least some lipoproteins. Aids folding of multispanning membrane proteins. This chain is Membrane protein insertase YidC, found in Buchnera aphidicola subsp. Acyrthosiphon pisum (strain APS) (Acyrthosiphon pisum symbiotic bacterium).